Here is a 344-residue protein sequence, read N- to C-terminus: Programmed cell death protein 2 (344 aa).

The Zn(2+) site is built by Cys-135, Cys-138, Cys-146, Cys-149, Cys-155, His-159, His-168, and Cys-172. The segment at 135–172 (CRVCGCSGPKRCSRCHKAHYCSKEHQSLDWRLGHKQAC) adopts an MYND-type; atypical zinc-finger fold.

Ubiquitinated by PRKN, promoting proteasomal degradation.

The protein resides in the nucleus. May be a DNA-binding protein with a regulatory function. May play an important role in cell death and/or in regulation of cell proliferation. In Bos taurus (Bovine), this protein is Programmed cell death protein 2 (PDCD2).